Here is a 400-residue protein sequence, read N- to C-terminus: Elongation factor Tu (400 aa).

One can recognise a tr-type G domain in the interval 10 to 210 (KPHINVGTIG…ALDEYIPEPK (201 aa)). The interval 19–26 (GHVDHGKT) is G1. 19–26 (GHVDHGKT) serves as a coordination point for GTP. Thr26 serves as a coordination point for Mg(2+). The tract at residues 64–68 (GITIA) is G2. The segment at 85 to 88 (DCPG) is G3. Residues 85 to 89 (DCPGH) and 140 to 143 (NKAD) each bind GTP. Residues 140 to 143 (NKAD) are G4. The segment at 178–180 (SAL) is G5.

The protein belongs to the TRAFAC class translation factor GTPase superfamily. Classic translation factor GTPase family. EF-Tu/EF-1A subfamily. Monomer.

Its subcellular location is the cytoplasm. It carries out the reaction GTP + H2O = GDP + phosphate + H(+). Its function is as follows. GTP hydrolase that promotes the GTP-dependent binding of aminoacyl-tRNA to the A-site of ribosomes during protein biosynthesis. In Rubrobacter xylanophilus (strain DSM 9941 / JCM 11954 / NBRC 16129 / PRD-1), this protein is Elongation factor Tu.